Here is a 571-residue protein sequence, read N- to C-terminus: Sulfite reductase [NADPH] hemoprotein beta-component (571 aa).

Residues Cys435, Cys441, Cys480, and Cys484 each contribute to the [4Fe-4S] cluster site. Residue Cys484 coordinates siroheme.

Belongs to the nitrite and sulfite reductase 4Fe-4S domain family. Alpha(8)-beta(8). The alpha component is a flavoprotein, the beta component is a hemoprotein. The cofactor is siroheme. [4Fe-4S] cluster serves as cofactor.

The catalysed reaction is hydrogen sulfide + 3 NADP(+) + 3 H2O = sulfite + 3 NADPH + 4 H(+). It participates in sulfur metabolism; hydrogen sulfide biosynthesis; hydrogen sulfide from sulfite (NADPH route): step 1/1. Functionally, component of the sulfite reductase complex that catalyzes the 6-electron reduction of sulfite to sulfide. This is one of several activities required for the biosynthesis of L-cysteine from sulfate. The sequence is that of Sulfite reductase [NADPH] hemoprotein beta-component from Erwinia tasmaniensis (strain DSM 17950 / CFBP 7177 / CIP 109463 / NCPPB 4357 / Et1/99).